The chain runs to 338 residues: Tetraacyldisaccharide 4'-kinase (338 aa).

51–58 (HVGGAGKT) lines the ATP pocket.

Belongs to the LpxK family.

The enzyme catalyses a lipid A disaccharide + ATP = a lipid IVA + ADP + H(+). It participates in glycolipid biosynthesis; lipid IV(A) biosynthesis; lipid IV(A) from (3R)-3-hydroxytetradecanoyl-[acyl-carrier-protein] and UDP-N-acetyl-alpha-D-glucosamine: step 6/6. Transfers the gamma-phosphate of ATP to the 4'-position of a tetraacyldisaccharide 1-phosphate intermediate (termed DS-1-P) to form tetraacyldisaccharide 1,4'-bis-phosphate (lipid IVA). The chain is Tetraacyldisaccharide 4'-kinase from Bradyrhizobium diazoefficiens (strain JCM 10833 / BCRC 13528 / IAM 13628 / NBRC 14792 / USDA 110).